The sequence spans 1320 residues: FERM and PDZ domain-containing protein 4 (1320 aa).

The WW domain occupies 33-66 (QVPPYGWEMMTNRDGRDYFINHMTQAIPFDDPRF). The PDZ domain occupies 78 to 155 (KVEMRRDPVL…SILLTVIQPY (78 aa)). Residues 204-519 (NVLKVYLENG…GYYRLLVDSR (316 aa)) enclose the FERM domain. Disordered regions lie at residues 809–847 (APPP…EIPV), 897–927 (YSPE…QKQS), 949–981 (TEFP…PPKV), 1024–1050 (KRKS…QQGT), 1114–1139 (PRGP…ADDA), and 1204–1274 (GHFS…ATFE). Residues 900–913 (ESSSDSGNETNSSE) are compositionally biased toward low complexity. Residues 1204–1217 (GHFSLQSSQGSSVD) are compositionally biased toward polar residues. The span at 1223 to 1232 (GSSSSACATP) shows a compositional bias: low complexity.

Interacts (via C-terminus) with DLG1, DLG2, DLG3 and DLG4/PSD95. Interacts (via N-terminus) with ARHGEF7; the interaction is mediated by the PDZ domain. Interacts with GPSM2 (via TPR repeat region). In terms of tissue distribution, expressed in various regions of the brain, including cortex, hippocampus, cerebellum, olfactory bulb and medial habenular nucleus.

The protein localises to the cell projection. It localises to the dendritic spine. Positive regulator of dendritic spine morphogenesis and density. Required for the maintenance of excitatory synaptic transmission. Binds phosphatidylinositol 4,5-bisphosphate. This chain is FERM and PDZ domain-containing protein 4 (Frmpd4), found in Mus musculus (Mouse).